Here is a 359-residue protein sequence, read N- to C-terminus: MATH domain and coiled-coil domain-containing protein At2g42475 (359 aa).

In terms of domain architecture, MATH spans 6–128 (KTSFTFEIEN…NDKLIITVEV (123 aa)). Residues 146–337 (EFKELQDLYN…NLELMVLDFK (192 aa)) are a coiled coil.

The polypeptide is MATH domain and coiled-coil domain-containing protein At2g42475 (Arabidopsis thaliana (Mouse-ear cress)).